The sequence spans 541 residues: Sorting nexin-27 (541 aa).

Residues 1-26 (MADEDGEGIHPAAPHRNGGGGGGGGS) form a disordered region. Residues 17 to 26 (NGGGGGGGGS) show a composition bias toward gly residues. A PDZ domain is found at 43–136 (VVRIVKSESG…ELILTVLSVP (94 aa)). Phosphoserine occurs at positions 51 and 62. Positions 161–269 (QAVPISVPTY…EFLSESDENY (109 aa)) constitute a PX domain. The Ras-associating domain occupies 273-362 (SDVELRVALP…TCLTIRKWLF (90 aa)). Positions 273-362 (SDVELRVALP…TCLTIRKWLF (90 aa)) are FERM-like region F1. The FERM-like region F2 stretch occupies residues 373–421 (NDLAVTYFFHQAVDDVKKGYIKAEEKSYQLQKLYEQRKMVMYLNMLRTC). An FERM-like region F3 region spans residues 425–525 (NEIIFPHCAC…RVFCELKWRK (101 aa)).

Core component of the SNX27-retromer, a multiprotein complex composed of SNX27, the WASH complex and the retromer complex. Interacts (via PDZ domain) with a number of target transmembrane proteins (via PDZ-binding motif): ABCC4, ADRB2, ARHGEF7, GRIA1, GRIA2, GRIN1, GRIN2A GRIN2C, KCNJ6, KCNJ9 and SLC2A1/GLUT1. Interacts (via the FERM-like regions) with the WASH complex. Interacts with SNX1. Interacts with CYTIP. Interacts with DGKZ. Interacts with MCC. Interacts (via PDZ domains) with SLC9A3; directs SLC9A3 membrane insertion from early endosomes to the plasma membrane.

It is found in the early endosome membrane. The protein localises to the cytoplasm. Its subcellular location is the cytosol. In terms of biological role, involved in the retrograde transport from endosome to plasma membrane, a trafficking pathway that promotes the recycling of internalized transmembrane proteins. Following internalization, endocytosed transmembrane proteins are delivered to early endosomes and recycled to the plasma membrane instead of being degraded in lysosomes. SNX27 specifically binds and directs sorting of a subset of transmembrane proteins containing a PDZ-binding motif at the C-terminus: following interaction with target transmembrane proteins, associates with the retromer complex, preventing entry into the lysosomal pathway, and promotes retromer-tubule based plasma membrane recycling. SNX27 also binds with the WASH complex. Interacts with membranes containing phosphatidylinositol-3-phosphate (PtdIns(3P)). May participate in establishment of natural killer cell polarity. Recruits CYTIP to early endosomes. The polypeptide is Sorting nexin-27 (SNX27) (Bos taurus (Bovine)).